Reading from the N-terminus, the 433-residue chain is Probable M18 family aminopeptidase 2 (433 aa).

His79, His153, and His404 together coordinate Zn(2+).

Belongs to the peptidase M18 family. It depends on Zn(2+) as a cofactor.

The sequence is that of Probable M18 family aminopeptidase 2 (apeB) from Mycobacterium bovis (strain ATCC BAA-935 / AF2122/97).